Reading from the N-terminus, the 110-residue chain is Large ribosomal subunit protein uL22 (110 aa).

The protein belongs to the universal ribosomal protein uL22 family. In terms of assembly, part of the 50S ribosomal subunit.

Its function is as follows. This protein binds specifically to 23S rRNA; its binding is stimulated by other ribosomal proteins, e.g. L4, L17, and L20. It is important during the early stages of 50S assembly. It makes multiple contacts with different domains of the 23S rRNA in the assembled 50S subunit and ribosome. Functionally, the globular domain of the protein is located near the polypeptide exit tunnel on the outside of the subunit, while an extended beta-hairpin is found that lines the wall of the exit tunnel in the center of the 70S ribosome. The sequence is that of Large ribosomal subunit protein uL22 from Aliarcobacter butzleri (strain RM4018) (Arcobacter butzleri).